The following is a 116-amino-acid chain: Small ribosomal subunit protein eS24 (116 aa).

A disordered region spans residues Ile81–Glu116. A compositionally biased stretch (acidic residues) spans Glu96–Glu116.

The protein belongs to the eukaryotic ribosomal protein eS24 family.

This chain is Small ribosomal subunit protein eS24, found in Methanopyrus kandleri (strain AV19 / DSM 6324 / JCM 9639 / NBRC 100938).